A 119-amino-acid polypeptide reads, in one-letter code: Beta-2-microglobulin (119 aa).

The N-terminal stretch at 1–20 is a signal peptide; that stretch reads MACFVVVALLVLLSLSGLEA. An Ig-like C1-type domain is found at 25 to 114; that stretch reads PKIQVYSRHP…VTFSTPKTVK (90 aa). Cysteine 45 and cysteine 100 are joined by a disulfide.

Belongs to the beta-2-microglobulin family. In terms of assembly, heterodimer of an alpha chain and a beta chain. Beta-2-microglobulin is the beta-chain of major histocompatibility complex class I molecules.

The protein resides in the secreted. Functionally, component of the class I major histocompatibility complex (MHC). Involved in the presentation of peptide antigens to the immune system. This chain is Beta-2-microglobulin (B2M), found in Leontopithecus chrysopygus (Golden-rumped lion tamarin).